Reading from the N-terminus, the 238-residue chain is Probable transcriptional regulatory protein VPA0011 (238 aa).

It belongs to the TACO1 family.

The protein localises to the cytoplasm. In Vibrio parahaemolyticus serotype O3:K6 (strain RIMD 2210633), this protein is Probable transcriptional regulatory protein VPA0011.